An 86-amino-acid polypeptide reads, in one-letter code: Large ribosomal subunit protein bL31B (86 aa).

The protein belongs to the bacterial ribosomal protein bL31 family. Type B subfamily. Part of the 50S ribosomal subunit.

The protein is Large ribosomal subunit protein bL31B of Burkholderia lata (strain ATCC 17760 / DSM 23089 / LMG 22485 / NCIMB 9086 / R18194 / 383).